Reading from the N-terminus, the 244-residue chain is Probable septum site-determining protein MinC (244 aa).

This sequence belongs to the MinC family. As to quaternary structure, interacts with MinD and FtsZ.

Its function is as follows. Cell division inhibitor that blocks the formation of polar Z ring septums. Rapidly oscillates between the poles of the cell to destabilize FtsZ filaments that have formed before they mature into polar Z rings. Prevents FtsZ polymerization. The chain is Probable septum site-determining protein MinC from Dichelobacter nodosus (strain VCS1703A).